The sequence spans 354 residues: Fructose-bisphosphate aldolase (354 aa).

Residue S61 coordinates D-glyceraldehyde 3-phosphate. The active-site Proton donor is D104. Positions 105, 139, 169, and 221 each coordinate Zn(2+). G222 provides a ligand contact to dihydroxyacetone phosphate. Residue H260 coordinates Zn(2+). Dihydroxyacetone phosphate is bound by residues 261 to 263 (GGS) and 282 to 285 (NIDT).

The protein belongs to the class II fructose-bisphosphate aldolase family. In terms of assembly, homodimer. Zn(2+) is required as a cofactor.

The catalysed reaction is beta-D-fructose 1,6-bisphosphate = D-glyceraldehyde 3-phosphate + dihydroxyacetone phosphate. It functions in the pathway carbohydrate degradation; glycolysis; D-glyceraldehyde 3-phosphate and glycerone phosphate from D-glucose: step 4/4. Functionally, catalyzes the aldol condensation of dihydroxyacetone phosphate (DHAP or glycerone-phosphate) with glyceraldehyde 3-phosphate (G3P) to form fructose 1,6-bisphosphate (FBP) in gluconeogenesis and the reverse reaction in glycolysis. The protein is Fructose-bisphosphate aldolase (fba) of Campylobacter jejuni subsp. jejuni serotype O:2 (strain ATCC 700819 / NCTC 11168).